Consider the following 446-residue polypeptide: Exodeoxyribonuclease 7 large subunit (446 aa).

The protein belongs to the XseA family. Heterooligomer composed of large and small subunits.

It localises to the cytoplasm. It catalyses the reaction Exonucleolytic cleavage in either 5'- to 3'- or 3'- to 5'-direction to yield nucleoside 5'-phosphates.. Functionally, bidirectionally degrades single-stranded DNA into large acid-insoluble oligonucleotides, which are then degraded further into small acid-soluble oligonucleotides. This chain is Exodeoxyribonuclease 7 large subunit, found in Geotalea uraniireducens (strain Rf4) (Geobacter uraniireducens).